A 644-amino-acid polypeptide reads, in one-letter code: MQTVRMTTAQALVKFLNQQYIEFDGEQQKFIKGIFTIFGHGNVVGLGQALEEDAGELEVYQGRNEQGMANAAMAFAKQKHRKQIMACTSSVGPGSANMITSAATASANNIPVLLLPGDVFATRQPDPVLQQIEQTHDLSISTNDAFRAVSKYWDRINRPEQLMTAMIQAMRVLTNPADTGAVTICLPQDVQGEAWDFPSYFFQKCVHRIERRLPTRASLADAVEMIKRKKKPVMICGGGVRYAEAAEELKQFAEAFRIPFGETQAGKSAIESSHPYNLGGIGVTGNLAANTIAKEADLVIGIGTRFTDFTTASKQLFQNEEVEFVNINISEFHANKLDALKVIADAKEALLALINELQAIEYRSSYTVEIAAAKEFWETELARLHNIRFTGQDFKPEVEGHFDDNLNEYVDALGTQLTQTAVIGEMNTLLDEDAIIVGAAGSLPGDLQRMWTSRKPNTYHMEYGYSCMGYEVAGALGAKLAEPSKEVYAMVGDGSYQMLHSELVTSLQENKKINVLLFDNSGFGCINNLQMGNGMGSFGTEFRYRNEETRKLNGAIMKIDFAASAAGYGVKTYRVTSVEQLQEALKDAKKQTVSTLIDIKVLPKTMTNGYESWWHVGVAEVSNSQSVQAAYESKVSNLQKARSY.

Glu65 serves as a coordination point for thiamine diphosphate. Residues 442–522 form a thiamine pyrophosphate binding region; that stretch reads SLPGDLQRMW…INVLLFDNSG (81 aa). Mg(2+)-binding residues include Asp493 and Asn520.

Belongs to the TPP enzyme family. Mg(2+) serves as cofactor. Requires thiamine diphosphate as cofactor.

The catalysed reaction is 3D-3,5/4-trihydroxycyclohexane-1,2-dione + H2O = 5-deoxy-D-glucuronate + H(+). The protein operates within polyol metabolism; myo-inositol degradation into acetyl-CoA; acetyl-CoA from myo-inositol: step 3/7. Involved in the cleavage of the C1-C2 bond of 3D-(3,5/4)-trihydroxycyclohexane-1,2-dione (THcHDO) to yield 5-deoxy-glucuronate (5DG). The protein is 3D-(3,5/4)-trihydroxycyclohexane-1,2-dione hydrolase 2 of Bacillus cereus (strain ZK / E33L).